A 142-amino-acid chain; its full sequence is HTH-type transcriptional regulator MntR (142 aa).

In terms of domain architecture, HTH dtxR-type spans 1 to 63 (MTTPSMEDYI…YEKYRGLVLT (63 aa)). Cd(2+)-binding residues include Asp-8, Glu-11, His-77, Glu-99, Glu-102, and His-103. Asp-8, Glu-11, His-77, Glu-99, Glu-102, and His-103 together coordinate Mn(2+).

This sequence belongs to the DtxR/MntR family. As to quaternary structure, homodimer.

Its subcellular location is the cytoplasm. Its activity is regulated as follows. DNA binding is strongly activated by Mn(2+) and Cd(2+), but it is poorly activated by non-cognate metal cations, including Co(2+), Fe(2+), Ni(2+), Ca(2+) and Zn(2+). In the strict absence of divalent transition metal ions, MntR has a low affinity for DNA. In terms of biological role, central regulator of manganese homeostasis that regulates the expression of both manganese uptake and efflux systems. In the presence of high levels of manganese, it mediates repression of the manganese uptake systems MntH and MntABCD and activation of the efflux systems MneP and MneS. Binds with high affinity to the regulatory regions of its target genes. The manganese concentration required for activation of efflux is higher than that for repression of uptake. In Bacillus subtilis (strain 168), this protein is HTH-type transcriptional regulator MntR.